Consider the following 604-residue polypeptide: Elongation factor 4 (604 aa).

The tr-type G domain occupies 7-189; that stretch reads SKIRNFCIIA…SIVHLVPPPS (183 aa). Residues 19 to 24 and 136 to 139 contribute to the GTP site; these read DHGKST and NKID.

Belongs to the TRAFAC class translation factor GTPase superfamily. Classic translation factor GTPase family. LepA subfamily.

The protein resides in the cell inner membrane. It carries out the reaction GTP + H2O = GDP + phosphate + H(+). Functionally, required for accurate and efficient protein synthesis under certain stress conditions. May act as a fidelity factor of the translation reaction, by catalyzing a one-codon backward translocation of tRNAs on improperly translocated ribosomes. Back-translocation proceeds from a post-translocation (POST) complex to a pre-translocation (PRE) complex, thus giving elongation factor G a second chance to translocate the tRNAs correctly. Binds to ribosomes in a GTP-dependent manner. This is Elongation factor 4 from Synechococcus sp. (strain ATCC 27144 / PCC 6301 / SAUG 1402/1) (Anacystis nidulans).